Consider the following 308-residue polypeptide: UPF0282 protein YG5714_2245 (308 aa).

This sequence belongs to the UPF0282 family.

In Saccharolobus islandicus (strain Y.G.57.14 / Yellowstone #1) (Sulfolobus islandicus), this protein is UPF0282 protein YG5714_2245.